The chain runs to 288 residues: Putative movement protein (288 aa).

Residues 207-288 are disordered; it reads TGPRATLSQP…TSSRSRRVRG (82 aa).

Functionally, transports viral genome to neighboring plant cells directly through plasmosdesmata, without any budding. The movement protein allows efficient cell to cell propagation, by bypassing the host cell wall barrier (Potential). This chain is Putative movement protein, found in Cucumis melo (Muskmelon).